The primary structure comprises 385 residues: Uroporphyrinogen decarboxylase (385 aa).

Substrate-binding positions include 53 to 57, D102, Y179, S234, and H363; that span reads RQAGR.

Belongs to the uroporphyrinogen decarboxylase family. Homodimer.

Its subcellular location is the cytoplasm. The catalysed reaction is uroporphyrinogen III + 4 H(+) = coproporphyrinogen III + 4 CO2. The protein operates within porphyrin-containing compound metabolism; protoporphyrin-IX biosynthesis; coproporphyrinogen-III from 5-aminolevulinate: step 4/4. Functionally, catalyzes the decarboxylation of four acetate groups of uroporphyrinogen-III to yield coproporphyrinogen-III. The polypeptide is Uroporphyrinogen decarboxylase (Tropheryma whipplei (strain TW08/27) (Whipple's bacillus)).